We begin with the raw amino-acid sequence, 208 residues long: MIAIKDAHFLTSSGQLSQCPASLTSEMVILGRSNVGKSSFINTLLGKNLAKSSATPGKTRLANFFSTTWEDKENALRATFNVIDLPGFGYAKVSKSLKKEWEGFLWELLSVRVSIKLFIHLVDARHLNLEIDKNAKENIQALLRPDQAYLSLFTKFDKLNKNEQHRLFLNAPKPFLINSAHFNALSSKYPTLEVVRQTLLKYLLTNPL.

The 183-residue stretch at 23–205 folds into the EngB-type G domain; sequence LTSEMVILGR…RQTLLKYLLT (183 aa). GTP is bound by residues 31–38, 57–61, 84–87, 154–157, and 182–184; these read GRSNVGKS, GKTRL, DLPG, TKFD, and FNA. Mg(2+) is bound by residues serine 38 and threonine 59.

Belongs to the TRAFAC class TrmE-Era-EngA-EngB-Septin-like GTPase superfamily. EngB GTPase family. Mg(2+) is required as a cofactor.

Functionally, necessary for normal cell division and for the maintenance of normal septation. The polypeptide is Probable GTP-binding protein EngB (Helicobacter pylori (strain Shi470)).